Reading from the N-terminus, the 248-residue chain is Ubiquinone biosynthesis O-methyltransferase (248 aa).

The S-adenosyl-L-methionine site is built by R41, G72, D93, and M136.

It belongs to the methyltransferase superfamily. UbiG/COQ3 family.

The enzyme catalyses a 3-demethylubiquinol + S-adenosyl-L-methionine = a ubiquinol + S-adenosyl-L-homocysteine + H(+). It carries out the reaction a 3-(all-trans-polyprenyl)benzene-1,2-diol + S-adenosyl-L-methionine = a 2-methoxy-6-(all-trans-polyprenyl)phenol + S-adenosyl-L-homocysteine + H(+). Its pathway is cofactor biosynthesis; ubiquinone biosynthesis. Functionally, O-methyltransferase that catalyzes the 2 O-methylation steps in the ubiquinone biosynthetic pathway. The sequence is that of Ubiquinone biosynthesis O-methyltransferase from Sinorhizobium fredii (strain NBRC 101917 / NGR234).